Consider the following 374-residue polypeptide: Pyruvate dehydrogenase E1 component subunit beta-1, mitochondrial (374 aa).

The N-terminal 34 residues, 1 to 34 (MLGIARRRLGSGCALGQLMQALRPAAAAAAARTY), are a transit peptide targeting the mitochondrion. E97 contributes to the thiamine diphosphate binding site. K(+) is bound by residues I150, A198, I199, and D201.

In terms of assembly, tetramer of 2 alpha and 2 beta subunits. Thiamine diphosphate is required as a cofactor.

It localises to the mitochondrion matrix. The enzyme catalyses N(6)-[(R)-lipoyl]-L-lysyl-[protein] + pyruvate + H(+) = N(6)-[(R)-S(8)-acetyldihydrolipoyl]-L-lysyl-[protein] + CO2. Functionally, the pyruvate dehydrogenase complex catalyzes the overall conversion of pyruvate to acetyl-CoA and CO(2). It contains multiple copies of three enzymatic components: pyruvate dehydrogenase (E1), dihydrolipoamide acetyltransferase (E2) and lipoamide dehydrogenase (E3). This is Pyruvate dehydrogenase E1 component subunit beta-1, mitochondrial from Oryza sativa subsp. japonica (Rice).